The sequence spans 549 residues: Glucose-6-phosphate isomerase (549 aa).

The active-site Proton donor is glutamate 353. Active-site residues include histidine 384 and lysine 513.

This sequence belongs to the GPI family.

It is found in the cytoplasm. It catalyses the reaction alpha-D-glucose 6-phosphate = beta-D-fructose 6-phosphate. The protein operates within carbohydrate biosynthesis; gluconeogenesis. It participates in carbohydrate degradation; glycolysis; D-glyceraldehyde 3-phosphate and glycerone phosphate from D-glucose: step 2/4. In terms of biological role, catalyzes the reversible isomerization of glucose-6-phosphate to fructose-6-phosphate. In Brucella anthropi (strain ATCC 49188 / DSM 6882 / CCUG 24695 / JCM 21032 / LMG 3331 / NBRC 15819 / NCTC 12168 / Alc 37) (Ochrobactrum anthropi), this protein is Glucose-6-phosphate isomerase.